We begin with the raw amino-acid sequence, 33 residues long: Dermonecrotic toxin LiSicTox-alphaI-1 (33 aa).

Glu-32 lines the Mg(2+) pocket.

It belongs to the arthropod phospholipase D family. Class II subfamily. Mg(2+) is required as a cofactor. Post-translationally, contains 2 disulfide bonds. Expressed by the venom gland.

It is found in the secreted. It catalyses the reaction an N-(acyl)-sphingosylphosphocholine = an N-(acyl)-sphingosyl-1,3-cyclic phosphate + choline. The enzyme catalyses an N-(acyl)-sphingosylphosphoethanolamine = an N-(acyl)-sphingosyl-1,3-cyclic phosphate + ethanolamine. The catalysed reaction is a 1-acyl-sn-glycero-3-phosphocholine = a 1-acyl-sn-glycero-2,3-cyclic phosphate + choline. It carries out the reaction a 1-acyl-sn-glycero-3-phosphoethanolamine = a 1-acyl-sn-glycero-2,3-cyclic phosphate + ethanolamine. Its function is as follows. Dermonecrotic toxins cleave the phosphodiester linkage between the phosphate and headgroup of certain phospholipids (sphingolipid and lysolipid substrates), forming an alcohol (often choline) and a cyclic phosphate. This toxin acts on sphingomyelin (SM). It may also act on ceramide phosphoethanolamine (CPE), lysophosphatidylcholine (LPC) and lysophosphatidylethanolamine (LPE), but not on lysophosphatidylserine (LPS), and lysophosphatidylglycerol (LPG). It acts by transphosphatidylation, releasing exclusively cyclic phosphate products as second products. In vivo, intradermal injection induces dermonecrosis. Induces hemolysis, increased vascular permeability, edema, inflammatory response, and platelet aggregation. The polypeptide is Dermonecrotic toxin LiSicTox-alphaI-1 (Loxosceles intermedia (Brown spider)).